The chain runs to 192 residues: Pupal cuticle protein (192 aa).

The first 15 residues, 1 to 15 (MHLLMSLFGVLAVMQ), serve as a signal peptide directing secretion. The Chitin-binding type R&amp;R domain occupies 45–106 (DGNYRYAYET…PVGDHIPKVP (62 aa)). A compositionally biased stretch (polar residues) spans 149–163 (QDQTTPRSRPSSTPK). The interval 149–192 (QDQTTPRSRPSSTPKTIYLTHPPTLSDAPTRRPLRQRQNDSRRR) is disordered.

In terms of biological role, component of the cuticle of the pupa of fruit fly. This is Pupal cuticle protein (Pcp) from Drosophila pseudoobscura pseudoobscura (Fruit fly).